Reading from the N-terminus, the 487-residue chain is Betaine aldehyde dehydrogenase (487 aa).

Residues Ser26 and Asp93 each contribute to the K(+) site. Position 150 to 152 (150 to 152 (GAW)) interacts with NAD(+). The active-site Charge relay system is the Lys162. NAD(+)-binding positions include 176 to 179 (KPSE) and 229 to 232 (SVPT). Leu244 serves as a coordination point for K(+). Catalysis depends on Glu250, which acts as the Proton acceptor. The NAD(+) site is built by Gly252, Cys284, and Glu384. Cys284 acts as the Nucleophile in catalysis. Cys284 is modified (cysteine sulfenic acid (-SOH)). Positions 454 and 457 each coordinate K(+). Glu461 (charge relay system) is an active-site residue.

This sequence belongs to the aldehyde dehydrogenase family. Dimer of dimers. K(+) serves as cofactor.

The catalysed reaction is betaine aldehyde + NAD(+) + H2O = glycine betaine + NADH + 2 H(+). Its pathway is amine and polyamine biosynthesis; betaine biosynthesis via choline pathway; betaine from betaine aldehyde: step 1/1. Its function is as follows. Involved in the biosynthesis of the osmoprotectant glycine betaine. Catalyzes the irreversible oxidation of betaine aldehyde to the corresponding acid. The sequence is that of Betaine aldehyde dehydrogenase from Rhizobium johnstonii (strain DSM 114642 / LMG 32736 / 3841) (Rhizobium leguminosarum bv. viciae).